Reading from the N-terminus, the 371-residue chain is MEPIWAVGLMTGTVLDGNIDVALIKTDGERIAEFGPYALAPYPDWIRRLLEETLAQARVWNFNGPEPAIFKEAEEALTRAQSAAVKELVEGFGLTMADIGVVGFHGQTVLHRAPQKGRLGDTRQLGDGELMHSILGTKVAYDFRSADVRAGGQGAPLAAAYHTALLRSAGTGDDTAILNLGGVANITWSDGEGNFVAFDTGPANAPLNDFIKSHGLGEMDRDGALGRAGKVDETRLAKLLEHPYLSAAYPKSLDRFDFGASMADGLSVEDGAATLSAFTASAVGKALDLLPRRPKKLVVSGGGRHNPTIMSMLETHAGVTPIGAEMFGWRGDAVEAECFAFLAVRVLRGLPISFPGTTGVPAPMRGGRLAE.

ATP is bound at residue 12–20 (GTVLDGNID).

It belongs to the anhydro-N-acetylmuramic acid kinase family.

It catalyses the reaction 1,6-anhydro-N-acetyl-beta-muramate + ATP + H2O = N-acetyl-D-muramate 6-phosphate + ADP + H(+). It participates in amino-sugar metabolism; 1,6-anhydro-N-acetylmuramate degradation. The protein operates within cell wall biogenesis; peptidoglycan recycling. Its function is as follows. Catalyzes the specific phosphorylation of 1,6-anhydro-N-acetylmuramic acid (anhMurNAc) with the simultaneous cleavage of the 1,6-anhydro ring, generating MurNAc-6-P. Is required for the utilization of anhMurNAc either imported from the medium or derived from its own cell wall murein, and thus plays a role in cell wall recycling. The chain is Anhydro-N-acetylmuramic acid kinase from Rhizobium rhizogenes (strain K84 / ATCC BAA-868) (Agrobacterium radiobacter).